Reading from the N-terminus, the 328-residue chain is Tetraacyldisaccharide 4'-kinase (328 aa).

55 to 62 (TAGGNGKT) is a binding site for ATP.

The protein belongs to the LpxK family.

It catalyses the reaction a lipid A disaccharide + ATP = a lipid IVA + ADP + H(+). It functions in the pathway glycolipid biosynthesis; lipid IV(A) biosynthesis; lipid IV(A) from (3R)-3-hydroxytetradecanoyl-[acyl-carrier-protein] and UDP-N-acetyl-alpha-D-glucosamine: step 6/6. In terms of biological role, transfers the gamma-phosphate of ATP to the 4'-position of a tetraacyldisaccharide 1-phosphate intermediate (termed DS-1-P) to form tetraacyldisaccharide 1,4'-bis-phosphate (lipid IVA). In Escherichia fergusonii (strain ATCC 35469 / DSM 13698 / CCUG 18766 / IAM 14443 / JCM 21226 / LMG 7866 / NBRC 102419 / NCTC 12128 / CDC 0568-73), this protein is Tetraacyldisaccharide 4'-kinase.